The primary structure comprises 546 residues: Phosphomethylpyrimidine synthase (546 aa).

A compositionally biased stretch (polar residues) spans 1–19 (MSTPSSRSQAPETVTTGPI). Residues 1 to 20 (MSTPSSRSQAPETVTTGPIQ) are disordered. Substrate-binding positions include asparagine 146, methionine 175, tyrosine 204, histidine 240, 260 to 262 (SRG), 301 to 304 (DGLR), and glutamate 340. Residue histidine 344 participates in Zn(2+) binding. Tyrosine 367 contacts substrate. Histidine 408 is a Zn(2+) binding site. Cysteine 488, cysteine 491, and cysteine 496 together coordinate [4Fe-4S] cluster.

It belongs to the ThiC family. [4Fe-4S] cluster is required as a cofactor.

It catalyses the reaction 5-amino-1-(5-phospho-beta-D-ribosyl)imidazole + S-adenosyl-L-methionine = 4-amino-2-methyl-5-(phosphooxymethyl)pyrimidine + CO + 5'-deoxyadenosine + formate + L-methionine + 3 H(+). Its pathway is cofactor biosynthesis; thiamine diphosphate biosynthesis. In terms of biological role, catalyzes the synthesis of the hydroxymethylpyrimidine phosphate (HMP-P) moiety of thiamine from aminoimidazole ribotide (AIR) in a radical S-adenosyl-L-methionine (SAM)-dependent reaction. The protein is Phosphomethylpyrimidine synthase of Mycobacteroides abscessus (strain ATCC 19977 / DSM 44196 / CCUG 20993 / CIP 104536 / JCM 13569 / NCTC 13031 / TMC 1543 / L948) (Mycobacterium abscessus).